Here is a 267-residue protein sequence, read N- to C-terminus: MATPGASSARDEFVYMAKLAEQAERYEEMVEFMEKVAKAVDKDELTVEERNLLSVAYKNVIGARRASWRIISSIEQKEESRGNDDHVSLIRDYRSKIETELSDICDGILKLLDTILVPAAASGDSKVFYLKMKGDYHRYLAEFKSGQERKDAAEHTLTAYKAAQDIANSELAPTHPIRLGLALNFSVFYYEILNSPDRACNLAKQAFDEAIAELDTLGEESYKDSTLIMQLLRDNLTLWTSDMQDDVADDIKEAAPAAAKPADEQQS.

Ala-2 is subject to N-acetylalanine. Phosphoserine occurs at positions 72 and 195. Residue Thr-216 is modified to Phosphothreonine. Position 267 is a phosphoserine (Ser-267).

The protein belongs to the 14-3-3 family. In terms of assembly, interacts with TPK1. Interacts with the isocitrate dehydrogenase IDH3, and malate dehydrogenases MDH1 and MDH2. Interacts with DREB1A and DREB1B in the nucleus. Interacts with CINV1.

Its subcellular location is the nucleus. It is found in the cytoplasm. In terms of biological role, is associated with a DNA binding complex that binds to the G box, a well-characterized cis-acting DNA regulatory element found in plant genes. Involved in the regulation of nutrient metabolism. This Arabidopsis thaliana (Mouse-ear cress) protein is 14-3-3-like protein GF14 chi (GRF1).